We begin with the raw amino-acid sequence, 400 residues long: Hyaluronidase (400 aa).

An N-terminal signal peptide occupies residues 1–19; that stretch reads MQTILVLTTFLSAWFLAVG. Intrachain disulfides connect C31/C319, C196/C209, C344/C355, C349/C384, and C386/C395. E120 acts as the Proton donor in catalysis. 2 N-linked (GlcNAc...) asparagine glycosylation sites follow: N129 and N166. N-linked (GlcNAc...) asparagine glycans are attached at residues N243 and N275. The 57-residue stretch at 340-396 folds into the EGF-like domain; the sequence is NVARCSKQACSGRGRCTWPKDTSVIAWKFLVEKEDYDFYLGDIECKCVEGYEGRYCE.

The protein belongs to the glycosyl hydrolase 56 family. In terms of assembly, monomer. As to expression, expressed by the venom gland.

The protein localises to the secreted. The catalysed reaction is Random hydrolysis of (1-&gt;4)-linkages between N-acetyl-beta-D-glucosamine and D-glucuronate residues in hyaluronate.. Spider venom endo-hyaluronidase that is able to degrade purified hyaluronic acid (HA) and chondroitin sulfate (CS). Has no activity on dermatan sulfate (DS) and heparan sulfate (HS). Also increases the dermonecrotic effect of the dermonecrotic toxin (AC P0CE80), when injected in rabbit skin, supporting the hypothesis that venom hyaluronidases are spreading factors. This is Hyaluronidase from Loxosceles intermedia (Brown spider).